A 473-amino-acid polypeptide reads, in one-letter code: Sulfate adenylyltransferase subunit 1 (473 aa).

The region spanning 19–238 (KTLLKFLTCG…IKIKNSISSE (220 aa)) is the tr-type G domain. A G1 region spans residues 28–35 (GSVDDGKS). 28 to 35 (GSVDDGKS) is a GTP binding site. A G2 region spans residues 86 to 90 (GITID). The G3 stretch occupies residues 107 to 110 (DTPG). Residues 107-111 (DTPGH) and 162-165 (NKMD) each bind GTP. A G4 region spans residues 162–165 (NKMD). The tract at residues 200 to 202 (SAL) is G5.

Belongs to the TRAFAC class translation factor GTPase superfamily. Classic translation factor GTPase family. CysN/NodQ subfamily. Heterodimer composed of CysD, the smaller subunit, and CysN.

It carries out the reaction sulfate + ATP + H(+) = adenosine 5'-phosphosulfate + diphosphate. It participates in sulfur metabolism; hydrogen sulfide biosynthesis; sulfite from sulfate: step 1/3. With CysD forms the ATP sulfurylase (ATPS) that catalyzes the adenylation of sulfate producing adenosine 5'-phosphosulfate (APS) and diphosphate, the first enzymatic step in sulfur assimilation pathway. APS synthesis involves the formation of a high-energy phosphoric-sulfuric acid anhydride bond driven by GTP hydrolysis by CysN coupled to ATP hydrolysis by CysD. The chain is Sulfate adenylyltransferase subunit 1 from Buchnera aphidicola subsp. Acyrthosiphon pisum (strain 5A).